The primary structure comprises 28 residues: Trypsin inhibitor 2 (28 aa).

3 disulfides stabilise this stretch: cysteine 3/cysteine 20, cysteine 10/cysteine 22, and cysteine 16/cysteine 27.

Belongs to the protease inhibitor I7 (squash-type serine protease inhibitor) family.

The protein localises to the secreted. Functionally, inhibits trypsin. The polypeptide is Trypsin inhibitor 2 (Momordica charantia (Bitter gourd)).